We begin with the raw amino-acid sequence, 556 residues long: ATP synthase subunit beta-2, mitochondrial (556 aa).

Residues 1–20 show a composition bias toward low complexity; the sequence is MASRRVLSSLLRSSSGRSAA. Positions 1 to 37 are disordered; that stretch reads MASRRVLSSLLRSSSGRSAAKLVNRNPRLPSPSPARH. A mitochondrion-targeting transit peptide spans 1-51; the sequence is MASRRVLSSLLRSSSGRSAAKLVNRNPRLPSPSPARHAAPCSYLLGRVAEY. Ser59 carries the phosphoserine modification. 231 to 238 is a binding site for ATP; the sequence is GGAGVGKT.

It belongs to the ATPase alpha/beta chains family. In terms of assembly, F-type ATPases have 2 components, CF(1) - the catalytic core - and CF(0) - the membrane proton channel. CF(1) has five subunits: alpha(3), beta(3), gamma(1), delta(1), epsilon(1). CF(0) has three main subunits: a, b and c.

The protein localises to the mitochondrion. It localises to the mitochondrion inner membrane. It catalyses the reaction ATP + H2O + 4 H(+)(in) = ADP + phosphate + 5 H(+)(out). Its function is as follows. Mitochondrial membrane ATP synthase (F(1)F(0) ATP synthase or Complex V) produces ATP from ADP in the presence of a proton gradient across the membrane which is generated by electron transport complexes of the respiratory chain. F-type ATPases consist of two structural domains, F(1) - containing the extramembraneous catalytic core, and F(0) - containing the membrane proton channel, linked together by a central stalk and a peripheral stalk. During catalysis, ATP synthesis in the catalytic domain of F(1) is coupled via a rotary mechanism of the central stalk subunits to proton translocation. Subunits alpha and beta form the catalytic core in F(1). Rotation of the central stalk against the surrounding alpha(3)beta(3) subunits leads to hydrolysis of ATP in three separate catalytic sites on the beta subunits. The chain is ATP synthase subunit beta-2, mitochondrial from Arabidopsis thaliana (Mouse-ear cress).